We begin with the raw amino-acid sequence, 194 residues long: HTH-type transcriptional regulator BetI (194 aa).

An HTH tetR-type domain is found at 8–68 (EIRRAQLIDA…ATMRHVLRDL (61 aa)). The H-T-H motif DNA-binding region spans 31 to 50 (TLASVAQRANISTGIVSHYF).

Its pathway is amine and polyamine biosynthesis; betaine biosynthesis via choline pathway [regulation]. Its function is as follows. Repressor involved in the biosynthesis of the osmoprotectant glycine betaine. It represses transcription of the choline transporter BetT and the genes of BetAB involved in the synthesis of glycine betaine. This chain is HTH-type transcriptional regulator BetI, found in Burkholderia cenocepacia (strain ATCC BAA-245 / DSM 16553 / LMG 16656 / NCTC 13227 / J2315 / CF5610) (Burkholderia cepacia (strain J2315)).